Consider the following 264-residue polypeptide: Triosephosphate isomerase (264 aa).

N13 to K15 provides a ligand contact to substrate. Catalysis depends on H98, which acts as the Electrophile. E170 (proton acceptor) is an active-site residue. Residues G176, S216, and G237–G238 contribute to the substrate site.

It belongs to the triosephosphate isomerase family. Homodimer.

It localises to the cytoplasm. The enzyme catalyses D-glyceraldehyde 3-phosphate = dihydroxyacetone phosphate. The protein operates within carbohydrate biosynthesis; gluconeogenesis. It participates in carbohydrate degradation; glycolysis; D-glyceraldehyde 3-phosphate from glycerone phosphate: step 1/1. Its function is as follows. Involved in the gluconeogenesis. Catalyzes stereospecifically the conversion of dihydroxyacetone phosphate (DHAP) to D-glyceraldehyde-3-phosphate (G3P). The protein is Triosephosphate isomerase of Protochlamydia amoebophila (strain UWE25).